Reading from the N-terminus, the 193-residue chain is MLEVHIPSVGPEAEGPRQSPEKSHMVFRVEVLCSGRRHTVPRRYSEFHALHKRIKKLYKVPDFPSKRLPNWRTRGLEQRRQGLEAYIQGILYLNQEVPKELLEFLRLRHFPTDPKASNWGTLREFLPGDSSSQQHQRPVLSFHVDPYVCNPSPESLPNVVVNGVLQGLYSFSISPDKAQPKAACHPAPLPPMP.

Residues 1–21 form a disordered region; it reads MLEVHIPSVGPEAEGPRQSPE. Positions 1 to 118 constitute a PX domain; the sequence is MLEVHIPSVG…HFPTDPKASN (118 aa). 4 residues coordinate a 1,2-diacyl-sn-glycero-3-phospho-(1D-myo-inositol-3-phosphate): arginine 43, serine 45, lysine 66, and arginine 79.

It belongs to the sorting nexin family. As to quaternary structure, (Microbial infection) Interacts with P.falciparum (strain 3D7) CK1. In terms of tissue distribution, expressed in erythrocytes (at protein level).

The protein localises to the cytoplasmic vesicle membrane. Functionally, may be involved in several stages of intracellular trafficking. Interacts with membranes containing phosphatidylinositol 3-phosphate (PtdIns(3P)). The chain is Sorting nexin-22 (SNX22) from Homo sapiens (Human).